Reading from the N-terminus, the 332-residue chain is Super small secreted glycoprotein (332 aa).

The signal sequence occupies residues Met-1–Ser-33. N-linked (GlcNAc...) asparagine; by host glycosylation occurs at Asn-41. Intrachain disulfides connect Cys-109–Cys-136 and Cys-122–Cys-148. 4 N-linked (GlcNAc...) asparagine; by host glycosylation sites follow: Asn-205, Asn-239, Asn-258, and Asn-269.

Belongs to the filoviruses glycoprotein family.

It localises to the secreted. In Homo sapiens (Human), this protein is Super small secreted glycoprotein (GP).